Here is a 536-residue protein sequence, read N- to C-terminus: Pre-mRNA-splicing factor SLU7-B (536 aa).

Residues 1–42 (MATASVAFKSREDHRKKLELEEARKAGLAPAEVDEDGKEINP) form a disordered region. Residues 9–25 (KSREDHRKKLELEEARK) show a composition bias toward basic and acidic residues. The CCHC-type zinc finger occupies 96–109 (CINCGAMTHSSKAC). 2 disordered regions span residues 176–201 (LKKLEEKNNNENGDDATSDGEEDLDD) and 488–507 (KEDLSRREEKDERKRKYNVN). Acidic residues predominate over residues 187-200 (NGDDATSDGEEDLD). Phosphoserine is present on S193. Residues 486–493 (LKKEDLSR) carry the Nuclear localization signal motif. The segment covering 488–501 (KEDLSRREEKDERK) has biased composition (basic and acidic residues).

Belongs to the SLU7 family. Interacts with PHYB in photobodies under red light.

It is found in the nucleus. Participates in the second catalytic step of pre-mRNA splicing, when the free hydroxyl group of exon I attacks the 3'-splice site to generate spliced mRNA and the excised lariat intron. Splicing factor acting as a negative regulator of seedling photomorphogenesis by antagonizing PHYB signaling to promote light-induced hypocotyl elongation. Prevents the accumulation of functionally spliced RVE8a form, a circadian clock regulator mediating the transcriptional activation of clock genes containing evening elements (EE), but promotes PIF4 expression to fine-tune hypocotyl elongation in the light. Together with SMP1, involved in the timing of cell cycle arrest during leaf development, in a STRUWWELPETER (SWP) dependent manner; promotes cell proliferation in developing organs. This is Pre-mRNA-splicing factor SLU7-B from Arabidopsis thaliana (Mouse-ear cress).